A 162-amino-acid polypeptide reads, in one-letter code: Large ribosomal subunit protein uL10 (162 aa).

It belongs to the universal ribosomal protein uL10 family. In terms of assembly, part of the ribosomal stalk of the 50S ribosomal subunit. The N-terminus interacts with L11 and the large rRNA to form the base of the stalk. The C-terminus forms an elongated spine to which L12 dimers bind in a sequential fashion forming a multimeric L10(L12)X complex.

Functionally, forms part of the ribosomal stalk, playing a central role in the interaction of the ribosome with GTP-bound translation factors. This Vibrio cholerae serotype O1 (strain ATCC 39541 / Classical Ogawa 395 / O395) protein is Large ribosomal subunit protein uL10.